Reading from the N-terminus, the 213-residue chain is Uridine kinase (213 aa).

14-21 (GASASGKS) is an ATP binding site.

The protein belongs to the uridine kinase family.

It localises to the cytoplasm. The enzyme catalyses uridine + ATP = UMP + ADP + H(+). It catalyses the reaction cytidine + ATP = CMP + ADP + H(+). Its pathway is pyrimidine metabolism; CTP biosynthesis via salvage pathway; CTP from cytidine: step 1/3. It functions in the pathway pyrimidine metabolism; UMP biosynthesis via salvage pathway; UMP from uridine: step 1/1. The sequence is that of Uridine kinase from Vibrio parahaemolyticus serotype O3:K6 (strain RIMD 2210633).